Reading from the N-terminus, the 447-residue chain is Argininosuccinate lyase (447 aa).

Belongs to the lyase 1 family. Argininosuccinate lyase subfamily.

It is found in the cytoplasm. The enzyme catalyses 2-(N(omega)-L-arginino)succinate = fumarate + L-arginine. The protein operates within amino-acid biosynthesis; L-arginine biosynthesis; L-arginine from L-ornithine and carbamoyl phosphate: step 3/3. The sequence is that of Argininosuccinate lyase from Sulfolobus acidocaldarius (strain ATCC 33909 / DSM 639 / JCM 8929 / NBRC 15157 / NCIMB 11770).